We begin with the raw amino-acid sequence, 2543 residues long: Polyketide synthase PksR (2543 aa).

Residues 165 to 269 (LEIGAGTGGT…KAVLKKNGLL (105 aa)) are methyltransferase. The Carrier 1 domain maps to 376-452 (SLIEQTAQFV…ELVEYLVKGH (77 aa)). O-(pantetheine 4'-phosphoryl)serine is present on Ser-413. The interval 465–485 (TKPAKNEAPLQTERTDPNKPF) is disordered. In terms of domain architecture, Ketosynthase family 3 (KS3) 1 spans 527 to 959 (TEDIAIIGVS…GAYANLIIEE (433 aa)). The active-site For beta-ketoacyl synthase 1 activity is Cys-700. Positions 1114–1242 (HFDVSSINEK…GQCGIGSFEP (129 aa)) are N-terminal hotdog fold. Residues 1114-1397 (HFDVSSINEK…LKQLRISNQR (284 aa)) form the PKS/mFAS DH domain. A C-terminal hotdog fold region spans residues 1255-1397 (TKLHHIDQMY…LKQLRISNQR (143 aa)). Positions 1407-1485 (SNLKARIRSY…ELIDFFADKH (79 aa)) constitute a Carrier 2 domain. Ser-1445 is modified (O-(pantetheine 4'-phosphoryl)serine). Residues 1528-1946 (ADGIAIIGMS…GVNAHVILEE (419 aa)) enclose the Ketosynthase family 3 (KS3) 2 domain. Residues Cys-1680, His-1815, and His-1862 each act as for beta-ketoacyl synthase 2 activity in the active site. The Carrier 3 domain maps to 2134–2208 (RINNSSDHHI…DMMDLIAKKQ (75 aa)). Residue Ser-2168 is modified to O-(pantetheine 4'-phosphoryl)serine. The interval 2234–2514 (RPVFWFHGGV…EFCEKLYSNR (281 aa)) is thioesterase.

Pantetheine 4'-phosphate is required as a cofactor.

It is found in the cytoplasm. It functions in the pathway antibiotic biosynthesis; bacillaene biosynthesis. In terms of biological role, involved in some intermediate steps for the synthesis of the antibiotic polyketide bacillaene which is involved in secondary metabolism. This chain is Polyketide synthase PksR (pksR), found in Bacillus subtilis (strain 168).